Consider the following 278-residue polypeptide: Urease accessory protein UreD (278 aa).

This sequence belongs to the UreD family. In terms of assembly, ureD, UreF and UreG form a complex that acts as a GTP-hydrolysis-dependent molecular chaperone, activating the urease apoprotein by helping to assemble the nickel containing metallocenter of UreC. The UreE protein probably delivers the nickel.

The protein resides in the cytoplasm. In terms of biological role, required for maturation of urease via the functional incorporation of the urease nickel metallocenter. This is Urease accessory protein UreD from Escherichia coli.